The chain runs to 211 residues: MSGTLVLVRHGQSDWNLKNLFTGWKDPDLTALGVEEAKTGGKALADYGIKYDIAFTSVLTRAQHTLKIILDEVGQPGLETIKDQALNERDYGDLSGLNKDDARAKWGEEQVHIWRRSYDVPPPGGESLRDTGARVWPYYLTEILPRVLAGQKVLVAAHGNSLRSLVMVLDRLTKEQILALNLATGVPMVYKLNADSTVASKEVLGDMSGAH.

Substrate is bound by residues 9-16, 22-23, Arg61, 88-91, Lys99, 115-116, and 159-160; these read RHGQSDWN, TG, ERDY, RR, and GN. His10 (tele-phosphohistidine intermediate) is an active-site residue. Glu88 serves as the catalytic Proton donor/acceptor.

This sequence belongs to the phosphoglycerate mutase family. BPG-dependent PGAM subfamily. In terms of assembly, homodimer.

The enzyme catalyses (2R)-2-phosphoglycerate = (2R)-3-phosphoglycerate. Its pathway is carbohydrate degradation; glycolysis; pyruvate from D-glyceraldehyde 3-phosphate: step 3/5. Its function is as follows. Catalyzes the interconversion of 2-phosphoglycerate and 3-phosphoglycerate. The sequence is that of 2,3-bisphosphoglycerate-dependent phosphoglycerate mutase from Rhizobium rhizogenes (strain K84 / ATCC BAA-868) (Agrobacterium radiobacter).